A 635-amino-acid polypeptide reads, in one-letter code: Threonine--tRNA ligase (635 aa).

The TGS domain occupies 1–61; the sequence is MVSIRLPDGS…DRDAALAIIT (61 aa). The catalytic stretch occupies residues 242 to 533; the sequence is DHRKLGKQLD…LIEHHAGAMP (292 aa). Residues cysteine 333, histidine 384, and histidine 510 each coordinate Zn(2+).

This sequence belongs to the class-II aminoacyl-tRNA synthetase family. In terms of assembly, homodimer. Zn(2+) serves as cofactor.

The protein resides in the cytoplasm. It catalyses the reaction tRNA(Thr) + L-threonine + ATP = L-threonyl-tRNA(Thr) + AMP + diphosphate + H(+). Functionally, catalyzes the attachment of threonine to tRNA(Thr) in a two-step reaction: L-threonine is first activated by ATP to form Thr-AMP and then transferred to the acceptor end of tRNA(Thr). Also edits incorrectly charged L-seryl-tRNA(Thr). In Burkholderia ambifaria (strain ATCC BAA-244 / DSM 16087 / CCUG 44356 / LMG 19182 / AMMD) (Burkholderia cepacia (strain AMMD)), this protein is Threonine--tRNA ligase.